Here is a 504-residue protein sequence, read N- to C-terminus: ATP synthase subunit alpha (504 aa).

Residue 169-176 participates in ATP binding; that stretch reads GDRQTGKT.

It belongs to the ATPase alpha/beta chains family. In terms of assembly, F-type ATPases have 2 components, CF(1) - the catalytic core - and CF(0) - the membrane proton channel. CF(1) has five subunits: alpha(3), beta(3), gamma(1), delta(1), epsilon(1). CF(0) has three main subunits: a(1), b(2) and c(9-12). The alpha and beta chains form an alternating ring which encloses part of the gamma chain. CF(1) is attached to CF(0) by a central stalk formed by the gamma and epsilon chains, while a peripheral stalk is formed by the delta and b chains.

The protein resides in the cell membrane. It carries out the reaction ATP + H2O + 4 H(+)(in) = ADP + phosphate + 5 H(+)(out). Its function is as follows. Produces ATP from ADP in the presence of a proton gradient across the membrane. The alpha chain is a regulatory subunit. The chain is ATP synthase subunit alpha from Clostridium botulinum (strain Alaska E43 / Type E3).